The sequence spans 179 residues: Large ribosomal subunit protein uL5 (179 aa).

This sequence belongs to the universal ribosomal protein uL5 family. In terms of assembly, part of the 50S ribosomal subunit; part of the 5S rRNA/L5/L18/L25 subcomplex. Contacts the 5S rRNA and the P site tRNA. Forms a bridge to the 30S subunit in the 70S ribosome.

This is one of the proteins that bind and probably mediate the attachment of the 5S RNA into the large ribosomal subunit, where it forms part of the central protuberance. In the 70S ribosome it contacts protein S13 of the 30S subunit (bridge B1b), connecting the 2 subunits; this bridge is implicated in subunit movement. Contacts the P site tRNA; the 5S rRNA and some of its associated proteins might help stabilize positioning of ribosome-bound tRNAs. The sequence is that of Large ribosomal subunit protein uL5 from Francisella philomiragia subsp. philomiragia (strain ATCC 25017 / CCUG 19701 / FSC 153 / O#319-036).